The primary structure comprises 393 residues: Meiotic driver wtf19 (393 aa).

Residues 1–98 are disordered; sequence MKNKYYPLRS…SSGTADNSST (98 aa). A compositionally biased stretch (basic and acidic residues) spans 11 to 29; it reads SMDELSAKNDNEIDLEKGP. Polar residues-rich tracts occupy residues 57 to 72 and 89 to 98; these read GANN…STTP and SSGTADNSST. 8 consecutive transmembrane segments (helical) span residues 104-124, 137-157, 167-187, 208-228, 233-253, 269-289, 296-316, and 332-352; these read AFLS…YLTY, WVYF…LWYF, VTVI…AQCV, CVKV…IGLF, EMMI…FGCV, CTIS…FWTF, LAKV…TMFL, and VLFI…GALI.

Belongs to the WTF family. In terms of assembly, homomer. Forms protein aggregates. The two isoforms can interact with each other and with themselves. High sequence similarity is required for their interaction.

It is found in the spore membrane. Its subcellular location is the vacuole membrane. It localises to the ascus epiplasm. The protein localises to the cytoplasm. The protein resides in the endoplasmic reticulum membrane. In terms of biological role, promotes unequal transmission of alleles from the parental zygote to progeny spores by acting as poison/antidote system where the poison and antidote proteins are produced from the same locus; the poison component is trans-acting and targets all spores within an ascus whereas the antidote component is spore-specific, leading to poisoning of all progeny that do not inherit the allele. Functionally, localizes isoform 2 to the vacuole thereby facilitating its degradation. Its function is as follows. Forms toxic aggregates that disrupt spore maturation. The chain is Meiotic driver wtf19 from Schizosaccharomyces pombe (strain 972 / ATCC 24843) (Fission yeast).